A 373-amino-acid polypeptide reads, in one-letter code: Glutamine synthetase (373 aa).

The GS beta-grasp domain maps to 24–106 (EKVQAMYIWI…VLCEVFKYNR (83 aa)). The GS catalytic domain occupies 113–373 (LRHTCRRIMD…TGDEPFEYKN (261 aa)). Residue Glu134 participates in ATP binding. Residues Glu134, Glu136, Glu196, and Glu203 each contribute to the Mn(2+) site. An ATP-binding site is contributed by 203 to 208 (EFQVGP). 246-247 (NW) provides a ligand contact to L-glutamate. His253 serves as a coordination point for Mn(2+). Residues 255–257 (NFS), Arg319, and Arg324 each bind ATP. Arg319 contributes to the L-glutamate binding site. 336–338 (YFE) contributes to the ADP binding site. Residue Glu338 coordinates Mn(2+). Arg340 contributes to the L-glutamate binding site.

Belongs to the glutamine synthetase family. In terms of assembly, homooctamer and homotetramer. Biotin serves as cofactor. Mg(2+) is required as a cofactor. It depends on Mn(2+) as a cofactor. Expressed in retina, brain and liver. Little or no detectable expression in breast muscle, pancreas and spleen.

The protein localises to the cytoplasm. It is found in the mitochondrion. The enzyme catalyses L-glutamate + NH4(+) + ATP = L-glutamine + ADP + phosphate + H(+). The catalysed reaction is L-glutamate + H(+) = 4-aminobutanoate + CO2. Its activity is regulated as follows. Glutamate to glutamine ratio influences catalytic activity. At glutamate to glutamine ratios greater than 4, decarboxylase activity ceases. In the presence of manganese, synthetase activity is limited to concentrations between 10 mM and 20 mM, whereas decarboxylase activity is not affected. Both catalytic activities are inhibited by avidin. In terms of biological role, glutamine synthetase that catalyzes the ATP-dependent conversion of glutamate and ammonia to glutamine. When expressed in liver, it may be involved in detoxifying intramitochondrially generated ammonia. Also acts as glutamate decarboxylase by catalyzing the production of 4-aminobutanoate (gamma-aminobutyric acid, GABA) in a pyridoxal phosphate-independent manner. The polypeptide is Glutamine synthetase (Gallus gallus (Chicken)).